Reading from the N-terminus, the 497-residue chain is UDP-N-acetylmuramoyl-L-alanyl-D-glutamate--2,6-diaminopimelate ligase (497 aa).

Residue S29 participates in UDP-N-acetyl-alpha-D-muramoyl-L-alanyl-D-glutamate binding. 116-122 (GTNGKTT) serves as a coordination point for ATP. UDP-N-acetyl-alpha-D-muramoyl-L-alanyl-D-glutamate contacts are provided by residues N157, 158–159 (TT), S185, Q191, and R193. K225 carries the post-translational modification N6-carboxylysine. Meso-2,6-diaminopimelate is bound by residues R392, 416–419 (DNPR), G467, and E471. The Meso-diaminopimelate recognition motif motif lies at 416-419 (DNPR).

The protein belongs to the MurCDEF family. MurE subfamily. Mg(2+) is required as a cofactor. In terms of processing, carboxylation is probably crucial for Mg(2+) binding and, consequently, for the gamma-phosphate positioning of ATP.

It localises to the cytoplasm. The enzyme catalyses UDP-N-acetyl-alpha-D-muramoyl-L-alanyl-D-glutamate + meso-2,6-diaminopimelate + ATP = UDP-N-acetyl-alpha-D-muramoyl-L-alanyl-gamma-D-glutamyl-meso-2,6-diaminopimelate + ADP + phosphate + H(+). Its pathway is cell wall biogenesis; peptidoglycan biosynthesis. Functionally, catalyzes the addition of meso-diaminopimelic acid to the nucleotide precursor UDP-N-acetylmuramoyl-L-alanyl-D-glutamate (UMAG) in the biosynthesis of bacterial cell-wall peptidoglycan. The protein is UDP-N-acetylmuramoyl-L-alanyl-D-glutamate--2,6-diaminopimelate ligase of Buchnera aphidicola subsp. Acyrthosiphon pisum (strain APS) (Acyrthosiphon pisum symbiotic bacterium).